The primary structure comprises 197 residues: Small ribosomal subunit protein uS4B (197 aa).

The S4 RNA-binding domain maps to 88-153 (CRLDNMVYRM…IEKYLSNLKN (66 aa)).

The protein belongs to the universal ribosomal protein uS4 family. In terms of assembly, part of the 30S ribosomal subunit. Contacts protein S5. The interaction surface between S4 and S5 is involved in control of translational fidelity.

Functionally, one of the primary rRNA binding proteins, it binds directly to 16S rRNA where it nucleates assembly of the body of the 30S subunit. With S5 and S12 plays an important role in translational accuracy. This is Small ribosomal subunit protein uS4B from Alkaliphilus oremlandii (strain OhILAs) (Clostridium oremlandii (strain OhILAs)).